The following is a 93-amino-acid chain: YcgL domain-containing protein VFMJ11_1829 (93 aa).

In terms of domain architecture, YcgL spans 1-84; it reads MFCSIYKSTK…PPENLLEKYK (84 aa).

In Aliivibrio fischeri (strain MJ11) (Vibrio fischeri), this protein is YcgL domain-containing protein VFMJ11_1829.